A 515-amino-acid polypeptide reads, in one-letter code: Serine--tRNA ligase, cytoplasmic (515 aa).

An interaction with tRNA region spans residues 9–61 (RTDKGGDPEIIRETQRKRFKDVSLVDKLVQADTEWRKCRFTADNLNKAKNLCS). L-serine contacts are provided by Thr271 and Arg302. Residues 302–304 (RQE) and 318–321 (VHQF) contribute to the ATP site. Glu325 provides a ligand contact to L-serine. 391–394 (ELVS) provides a ligand contact to ATP. Asn427 provides a ligand contact to L-serine. Residues 475 to 515 (PIDQETTKKQKKQQEGGKKKKHQGGDADLENKVENMSVNDS) are disordered. Positions 479-507 (ETTKKQKKQQEGGKKKKHQGGDADLENKV) are enriched in basic and acidic residues. Residues 482–494 (KKQKKQQEGGKKK) carry the Nuclear localization signal motif.

It belongs to the class-II aminoacyl-tRNA synthetase family. Type-1 seryl-tRNA synthetase subfamily.

Its subcellular location is the cytoplasm. It localises to the nucleus. It catalyses the reaction tRNA(Ser) + L-serine + ATP = L-seryl-tRNA(Ser) + AMP + diphosphate + H(+). The enzyme catalyses tRNA(Sec) + L-serine + ATP = L-seryl-tRNA(Sec) + AMP + diphosphate + H(+). Catalyzes the attachment of serine to tRNA(Ser) in a two-step reaction: serine is first activated by ATP to form Ser-AMP and then transferred to the acceptor end of tRNA(Ser). Is probably also able to aminoacylate tRNA(Sec) with serine, to form the misacylated tRNA L-seryl-tRNA(Sec), which will be further converted into selenocysteinyl-tRNA(Sec). In the nucleus, binds to the vegfa core promoter and prevents myc binding and transcriptional activation by myc. Thereby inhibits the production of vegfa and sprouting angiogenesis mediated by vegfa. The sequence is that of Serine--tRNA ligase, cytoplasmic (sars1) from Danio rerio (Zebrafish).